Consider the following 174-residue polypeptide: Gamma-crystallin D (174 aa).

Beta/gamma crystallin 'Greek key' domains follow at residues 2–40 (GKITLYEDRGFQGRHYECSSDHPNLQPYLSRCNSARVDS) and 41–83 (GCWM…RLIP). The connecting peptide stretch occupies residues 84-87 (HSGS). 2 consecutive Beta/gamma crystallin 'Greek key' domains span residues 88 to 128 (HRIR…NVLE) and 129 to 171 (GSWV…RRVI).

Belongs to the beta/gamma-crystallin family. Monomer.

Crystallins are the dominant structural components of the vertebrate eye lens. This chain is Gamma-crystallin D (CRYGD), found in Homo sapiens (Human).